The sequence spans 176 residues: Ribosome maturation factor RimM (176 aa).

The PRC barrel domain maps to 97–176; the sequence is EDEFYWRDLI…QILVDWDPDF (80 aa).

It belongs to the RimM family. As to quaternary structure, binds ribosomal protein uS19.

It localises to the cytoplasm. Its function is as follows. An accessory protein needed during the final step in the assembly of 30S ribosomal subunit, possibly for assembly of the head region. Essential for efficient processing of 16S rRNA. May be needed both before and after RbfA during the maturation of 16S rRNA. It has affinity for free ribosomal 30S subunits but not for 70S ribosomes. The sequence is that of Ribosome maturation factor RimM from Shewanella halifaxensis (strain HAW-EB4).